The sequence spans 209 residues: Ubiquitin-conjugating enzyme E2 S (209 aa).

In terms of domain architecture, UBC core spans 14–160 (QTIRQVMREL…ARMMTEIHAQ (147 aa)). Catalysis depends on C98, which acts as the Glycyl thioester intermediate. Residues 165-209 (GVGATGDAKDDGGPSTKKHAGLDKKLQDKKKEKLLKEKKRMLKRL) are disordered. Basic and acidic residues predominate over residues 184-199 (AGLDKKLQDKKKEKLL). Residues 200–209 (KEKKRMLKRL) are compositionally biased toward basic residues.

Belongs to the ubiquitin-conjugating enzyme family.

It carries out the reaction S-ubiquitinyl-[E1 ubiquitin-activating enzyme]-L-cysteine + [E2 ubiquitin-conjugating enzyme]-L-cysteine = [E1 ubiquitin-activating enzyme]-L-cysteine + S-ubiquitinyl-[E2 ubiquitin-conjugating enzyme]-L-cysteine.. It participates in protein modification; protein ubiquitination. In terms of biological role, catalyzes the covalent attachment of ubiquitin to other proteins. Acts as an essential factor of the anaphase promoting complex/cyclosome (APC/C), a cell cycle-regulated ubiquitin ligase that controls progression through mitosis. Acts by specifically elongating polyubiquitin chains initiated by the E2 enzyme vih/UbcH10 on APC/C substrates, enhancing the degradation of APC/C substrates by the proteasome and promoting mitotic exit. In Drosophila simulans (Fruit fly), this protein is Ubiquitin-conjugating enzyme E2 S.